Consider the following 431-residue polypeptide: Glutamate-1-semialdehyde 2,1-aminomutase (431 aa).

The residue at position 269 (Lys269) is an N6-(pyridoxal phosphate)lysine.

The protein belongs to the class-III pyridoxal-phosphate-dependent aminotransferase family. HemL subfamily. In terms of assembly, homodimer. Pyridoxal 5'-phosphate serves as cofactor.

It localises to the cytoplasm. The enzyme catalyses (S)-4-amino-5-oxopentanoate = 5-aminolevulinate. Its pathway is porphyrin-containing compound metabolism; protoporphyrin-IX biosynthesis; 5-aminolevulinate from L-glutamyl-tRNA(Glu): step 2/2. It participates in porphyrin-containing compound metabolism; chlorophyll biosynthesis. The sequence is that of Glutamate-1-semialdehyde 2,1-aminomutase from Prosthecochloris aestuarii (strain DSM 271 / SK 413).